A 282-amino-acid polypeptide reads, in one-letter code: tRNA (guanine-N(1)-)-methyltransferase (282 aa).

145–150 (IGDYVL) contributes to the S-adenosyl-L-methionine binding site.

Belongs to the RNA methyltransferase TrmD family. In terms of assembly, homodimer.

It localises to the cytoplasm. It catalyses the reaction guanosine(37) in tRNA + S-adenosyl-L-methionine = N(1)-methylguanosine(37) in tRNA + S-adenosyl-L-homocysteine + H(+). Its function is as follows. Specifically methylates guanosine-37 in various tRNAs. In Streptomyces avermitilis (strain ATCC 31267 / DSM 46492 / JCM 5070 / NBRC 14893 / NCIMB 12804 / NRRL 8165 / MA-4680), this protein is tRNA (guanine-N(1)-)-methyltransferase.